Reading from the N-terminus, the 457-residue chain is MALWGGRFTQAADQRFKQFNDSLRFDYRLAEQDIVGSVAWSKALVTVGVLTAEEQAQLEEALNVLLEDVRARPQQILESDAEDIHSWVEGKLIDKVGQLGKKLHTGRSRNDQVATDLKLWCKDTVSELLTANRQLQSALVETAQNNQDAVMPGYTHLQRAQPVTFAHWCLAYVEMLARDESRLQDALKRLDVSPLGCGALAGTAYEIDREQLAGWLGFASATRNSLDSVSDRDHVLELLSAAAIGMVHLSRFAEDLIFFNTGEAGFVELSDRVTSGSSLMPQKKNPDALELIRGKCGRVQGALTGMMMTLKGLPLAYNKDMQEDKEGLFDALDTWLDCLHMAALVLDGIQVKRPRCQEAAQQGYANATELADYLVAKGVPFREAHHIVGEAVVEAIRQGKALEDLPLSELQKFSQVIGEDVYPILSLQSCLDKRAAKGGVSPQQVAQAIAFAQARLG.

Belongs to the lyase 1 family. Argininosuccinate lyase subfamily.

It is found in the cytoplasm. It carries out the reaction 2-(N(omega)-L-arginino)succinate = fumarate + L-arginine. The protein operates within amino-acid biosynthesis; L-arginine biosynthesis; L-arginine from L-ornithine and carbamoyl phosphate: step 3/3. In Escherichia coli O1:K1 / APEC, this protein is Argininosuccinate lyase.